Reading from the N-terminus, the 560-residue chain is NAD(P)H-quinone oxidoreductase chain 4-3 (560 aa).

14 helical membrane-spanning segments follow: residues 5–25 (FPWLTAIILLPLVASAFIPLL), 35–55 (WYALGVGIADFVLMCYTFWHH), 86–106 (ISMPLVLLAGFVTTLSMLAAW), 114–134 (LFYFLMLVLYSAQIGVFVAQD), 135–155 (LLLFFIMWELELVPVYLLVSI), 168–188 (FLLYTAAASIFILIAGLAMAL), 208–228 (ALELLLYAGLLIAFGVKLAIF), 242–262 (SAPVSMILAGVLLKMGGYGLI), 273–293 (HIYFAPVLATLGVINIIYGGL), 310–330 (VSHMGFVLLGIASFTDVGVSG), 331–351 (AMLQMLSHGLIAAVLFFLAGV), 374–394 (VFALFTAGTMASLALPGMSGF), 417–437 (VMVFLAAVGVILTPIYLLSML), and 488–508 (VFIAVSFLVLIIGVGVYPKIA).

The protein belongs to the complex I subunit 4 family.

It localises to the cellular thylakoid membrane. The enzyme catalyses a plastoquinone + NADH + (n+1) H(+)(in) = a plastoquinol + NAD(+) + n H(+)(out). It catalyses the reaction a plastoquinone + NADPH + (n+1) H(+)(in) = a plastoquinol + NADP(+) + n H(+)(out). In terms of biological role, NDH-1 shuttles electrons from NAD(P)H, via FMN and iron-sulfur (Fe-S) centers, to quinones in the respiratory chain. The immediate electron acceptor for the enzyme in this species is believed to be plastoquinone. Couples the redox reaction to proton translocation (for every two electrons transferred, four hydrogen ions are translocated across the cytoplasmic membrane), and thus conserves the redox energy in a proton gradient. The chain is NAD(P)H-quinone oxidoreductase chain 4-3 (ndhD3) from Nostoc sp. (strain PCC 7120 / SAG 25.82 / UTEX 2576).